Reading from the N-terminus, the 327-residue chain is Probable 6-phosphogluconolactonase 3, chloroplastic (327 aa).

2 stretches are compositionally biased toward low complexity: residues 1 to 29 (MSAS…PASR) and 43 to 66 (VASR…PGGA). A disordered region spans residues 1–66 (MSASAAVSST…VYATASPGGA (66 aa)). A chloroplast-targeting transit peptide spans 1–71 (MSASAAVSST…SPGGAGGTTA (71 aa)).

The protein belongs to the glucosamine/galactosamine-6-phosphate isomerase family. 6-phosphogluconolactonase subfamily.

The protein localises to the plastid. The protein resides in the chloroplast. It carries out the reaction 6-phospho-D-glucono-1,5-lactone + H2O = 6-phospho-D-gluconate + H(+). Its pathway is carbohydrate degradation; pentose phosphate pathway; D-ribulose 5-phosphate from D-glucose 6-phosphate (oxidative stage): step 2/3. Its function is as follows. Hydrolysis of 6-phosphogluconolactone to 6-phosphogluconate. This is Probable 6-phosphogluconolactonase 3, chloroplastic from Oryza sativa subsp. indica (Rice).